We begin with the raw amino-acid sequence, 208 residues long: Small ribosomal subunit protein uS4 (208 aa).

The 61-residue stretch at 98–158 (SRLDNAVYRL…EKSRNMQVID (61 aa)) folds into the S4 RNA-binding domain.

It belongs to the universal ribosomal protein uS4 family. Part of the 30S ribosomal subunit. Contacts protein S5. The interaction surface between S4 and S5 is involved in control of translational fidelity.

Functionally, one of the primary rRNA binding proteins, it binds directly to 16S rRNA where it nucleates assembly of the body of the 30S subunit. Its function is as follows. With S5 and S12 plays an important role in translational accuracy. This Desulfosudis oleivorans (strain DSM 6200 / JCM 39069 / Hxd3) (Desulfococcus oleovorans) protein is Small ribosomal subunit protein uS4.